Reading from the N-terminus, the 871-residue chain is Zinc finger protein 473 (871 aa).

Positions 6-75 (VTLKDVGMDF…AGGSPEATSP (70 aa)) constitute a KRAB domain. Disordered regions lie at residues 47 to 81 (PPRPNLTSHPDGSEDLEPLAGGSPEATSPDVTETK) and 140 to 164 (NGESPTECKSHELKRGLSPVSTVST). The span at 71-81 (EATSPDVTETK) shows a compositional bias: polar residues. Residues 145–154 (TECKSHELKR) are compositionally biased toward basic and acidic residues. A Glycyl lysine isopeptide (Lys-Gly) (interchain with G-Cter in SUMO2) cross-link involves residue K148. The C2H2-type 1 zinc finger occupies 209–231 (YQCSECGKSFSGSYRLTQHWITH). The segment at 265-286 (YVCNEYGTTFSQSTYLWHQKTH) adopts a C2H2-type 2; degenerate zinc-finger fold. Basic and acidic residues predominate over residues 290 to 317 (KPCKSQDSDHPPSHDTQPGEHQKTHTDS). The tract at residues 290–318 (KPCKSQDSDHPPSHDTQPGEHQKTHTDSK) is disordered. The tract at residues 312–552 (KTHTDSKSYN…GFFVSGKILD (241 aa)) is interaction with SLBP/pre-mRNA complex. C2H2-type zinc fingers lie at residues 320 to 342 (YNCNECGKAFTRIFHLTRHQKIH), 347 to 369 (YECSKCQATFNLRKHLIQHQKTH), and 375 to 397 (SECQECGKIFRHSSLLIEHQALH). Residues 403–425 (YKCNERGKSFRHNSTLKIHQRVH) form a C2H2-type 6; degenerate zinc finger. K419 participates in a covalent cross-link: Glycyl lysine isopeptide (Lys-Gly) (interchain with G-Cter in SUMO2). C2H2-type zinc fingers lie at residues 431–453 (YKCSECGKAFHRHTHLNEHRRIH), 459–481 (HKCQECVRSFSRPSHLMRHQAIH), 487–509 (YSCAECKETFSDNNRLVQHQKMH), and 515–537 (YECQECGERFICGSTLKCHESVH). Glycyl lysine isopeptide (Lys-Gly) (interchain with G-Cter in SUMO2) cross-links involve residues K549 and K558. C2H2-type zinc fingers lie at residues 562–584 (FKCNKCEKTFSCSKYLTQHERIH) and 591–613 (FECDQCGKAFGQSTRLIHHQRIH). K635 participates in a covalent cross-link: Glycyl lysine isopeptide (Lys-Gly) (interchain with G-Cter in SUMO2). 8 consecutive C2H2-type zinc fingers follow at residues 646–668 (FKCNECGKTFSHSAHLSKHQLIH), 674–696 (FKCSKCDRVFTQRNYLVQHERTH), 702–724 (LVCNECGKTFRQSSCLSKHQRIH), 730–752 (YVCDYCGKAFGLSAELVRHQRIH), 758–780 (YVCQECGKAFTQSSCLSIHRRVH), 786–808 (YRCGECGKAFAQKANLTQHQRIH), 814–836 (YSCNVCGKAFVLSAHLNQHLRVH), and 842–864 (YQCQRCQKAFRCHSSLSRHQRVH).

The protein belongs to the krueppel C2H2-type zinc-finger protein family. Interacts with the SLBP/pre-mRNA complex but not with SLBP alone. Interacts with LSM11 in a U7 snRNP-dependent manner.

Its subcellular location is the nucleus. Its function is as follows. Involved in histone 3'-end pre-mRNA processing by associating with U7 snRNP and interacting with SLBP/pre-mRNA complex. Increases histone 3'-end pre-mRNA processing but has no effect on U7 snRNP levels, when overexpressed. Required for cell cycle progression from G1 to S phases. The sequence is that of Zinc finger protein 473 (ZNF473) from Homo sapiens (Human).